The primary structure comprises 883 residues: Phosphoenolpyruvate carboxylase (883 aa).

Residues His138 and Lys546 contribute to the active site.

This sequence belongs to the PEPCase type 1 family. Requires Mg(2+) as cofactor.

The enzyme catalyses oxaloacetate + phosphate = phosphoenolpyruvate + hydrogencarbonate. Its function is as follows. Forms oxaloacetate, a four-carbon dicarboxylic acid source for the tricarboxylic acid cycle. The polypeptide is Phosphoenolpyruvate carboxylase (Escherichia fergusonii (strain ATCC 35469 / DSM 13698 / CCUG 18766 / IAM 14443 / JCM 21226 / LMG 7866 / NBRC 102419 / NCTC 12128 / CDC 0568-73)).